The chain runs to 239 residues: Protein NtpR (239 aa).

Positions 12–239 (LIRATDTFQG…GLFDFFVQEF (228 aa)) constitute a Glutamine amidotransferase type-1 domain. Cys-113 (nucleophile) is an active-site residue. Active-site residues include His-217 and Glu-219.

The polypeptide is Protein NtpR (ntpR) (Enterococcus hirae (strain ATCC 9790 / DSM 20160 / JCM 8729 / LMG 6399 / NBRC 3181 / NCIMB 6459 / NCDO 1258 / NCTC 12367 / WDCM 00089 / R)).